A 379-amino-acid chain; its full sequence is Junctional adhesion molecule-like (379 aa).

The first 20 residues, 1-20 (MLCLLKLIVIPVILAPVGYP), serve as a signal peptide directing secretion. The Extracellular segment spans residues 21-281 (QGLPGLTVSS…QQGILNGNQL (261 aa)). 2 consecutive Ig-like V-type domains span residues 24-135 (PGLT…KPVE) and 140-250 (PEEP…KTIV). The cysteines at positions 45 and 119 are disulfide-linked. N-linked (GlcNAc...) asparagine glycosylation is found at Asn79, Asn89, and Asn125. A disulfide bridge links Cys158 with Cys236. A helical membrane pass occupies residues 282-302 (VIIVGIVCATFLLLPVLILIV). The Cytoplasmic segment spans residues 303–379 (KKAKWNKSSV…SLVRSSVRSK (77 aa)). Position 355 is a phosphotyrosine (Tyr355).

Belongs to the immunoglobulin superfamily. As to quaternary structure, homodimer; active form in leukocyte-endothelial cell adhesion. Interacts (homodimeric form) with CXADR. Interacts (via cytoplasmic domain) with the PI3 kinase; upon CXADR-binding. Interacts with ITGA4 and ITGB1; integrin alpha-4/beta-1 may regulate leukocyte to endothelial cells adhesion by controlling JAML homodimerization. In terms of tissue distribution, expressed by gamma-delta intraepithelial T cells (at protein level).

It is found in the cell membrane. Its subcellular location is the cell junction. Functionally, transmembrane protein of the plasma membrane of leukocytes that control their migration and activation through interaction with CXADR, a plasma membrane receptor found on adjacent epithelial and endothelial cells. The interaction between both receptors mediates the activation of gamma-delta T-cells, a subpopulation of T-cells residing in epithelia and involved in tissue homeostasis and repair. Upon epithelial CXADR-binding, JAML induces downstream cell signaling events in gamma-delta T-cells through PI3-kinase and MAP kinases. It results in proliferation and production of cytokines and growth factors by T-cells that in turn stimulate epithelial tissues repair. It also controls the transmigration of leukocytes within epithelial and endothelial tissues through adhesive interactions with epithelial and endothelial CXADR. The sequence is that of Junctional adhesion molecule-like from Mus musculus (Mouse).